The primary structure comprises 115 residues: Large ribosomal subunit protein uL22 (115 aa).

Belongs to the universal ribosomal protein uL22 family. As to quaternary structure, part of the 50S ribosomal subunit.

Functionally, this protein binds specifically to 23S rRNA; its binding is stimulated by other ribosomal proteins, e.g. L4, L17, and L20. It is important during the early stages of 50S assembly. It makes multiple contacts with different domains of the 23S rRNA in the assembled 50S subunit and ribosome. The globular domain of the protein is located near the polypeptide exit tunnel on the outside of the subunit, while an extended beta-hairpin is found that lines the wall of the exit tunnel in the center of the 70S ribosome. This Lactiplantibacillus plantarum (strain ATCC BAA-793 / NCIMB 8826 / WCFS1) (Lactobacillus plantarum) protein is Large ribosomal subunit protein uL22.